A 122-amino-acid polypeptide reads, in one-letter code: Small ribosomal subunit protein uS13 (122 aa).

The segment at histidine 92–lysine 122 is disordered.

This sequence belongs to the universal ribosomal protein uS13 family. Part of the 30S ribosomal subunit. Forms a loose heterodimer with protein S19. Forms two bridges to the 50S subunit in the 70S ribosome.

Functionally, located at the top of the head of the 30S subunit, it contacts several helices of the 16S rRNA. In the 70S ribosome it contacts the 23S rRNA (bridge B1a) and protein L5 of the 50S subunit (bridge B1b), connecting the 2 subunits; these bridges are implicated in subunit movement. Contacts the tRNAs in the A and P-sites. The protein is Small ribosomal subunit protein uS13 of Paracoccus denitrificans (strain Pd 1222).